A 221-amino-acid chain; its full sequence is 7-cyano-7-deazaguanine synthase (221 aa).

9–19 (YSGGMDSFTVL) is an ATP binding site. Zn(2+) contacts are provided by Cys-186, Cys-194, Cys-197, and Cys-200.

It belongs to the QueC family. Zn(2+) is required as a cofactor.

The catalysed reaction is 7-carboxy-7-deazaguanine + NH4(+) + ATP = 7-cyano-7-deazaguanine + ADP + phosphate + H2O + H(+). Its pathway is purine metabolism; 7-cyano-7-deazaguanine biosynthesis. Its function is as follows. Catalyzes the ATP-dependent conversion of 7-carboxy-7-deazaguanine (CDG) to 7-cyano-7-deazaguanine (preQ(0)). The sequence is that of 7-cyano-7-deazaguanine synthase from Psychromonas ingrahamii (strain DSM 17664 / CCUG 51855 / 37).